Here is a 242-residue protein sequence, read N- to C-terminus: MFSNLHLPLNPIDKVNQPPVYYLQVQDGLIICSGLCWTTAYILYIRQAYRDKSYGMPLVCLCANIAWEFLFGAAIPESAAQVVSFFPWFVIDIGIVYTTWKFGREQWKHAPLVAQNLGWILLGGIAGMLVMFWAFLKTYDNRYEAGFYLAWTDQIIVSTTSVAQLMSRNNTSGHSWGIWFTRWIGSVFAELIFVWRYWNYPESYPVAATHVTIFLFIVTEVADLTYPFVYASLDKKEKKKLK.

The next 4 helical transmembrane spans lie at 25–45 (VQDG…ILYI), 55–75 (GMPL…GAAI), 80–100 (AQVV…YTTW), and 116–136 (NLGW…WAFL). N-linked (GlcNAc...) asparagine glycosylation is present at Asn170. 2 consecutive transmembrane segments (helical) span residues 175 to 195 (SWGI…IFVW) and 211 to 231 (VTIF…FVYA).

Belongs to the paxB family.

It localises to the membrane. The protein operates within secondary metabolite biosynthesis; terpenoid biosynthesis. Functionally, terpene cyclase; part of the gene cluster that mediates the biosynthesis of the phthalide-terpenoid hybrid 11'-O-desmethylfendlerol. Within the pathway, mfmH catalyzes the last step and cyclizes the prenyl unit of 5-O-farnesylcyclopolic acid into a drimane-like structure to yield 11'-O-desmethylfendlerol. The biosynthesis of 11'-O-desmethylfendlerol begins with the NR-PKS mfmB that forms 3,5-dimethylorsellinic acid (DMOA), which is then transformed into the phthalide 5,7-dihydroxy-4-(hydroxymethyl)-6-methylphthalide by the cytochrome P450 monooxygenase mfmA and the hydrolase mfmC. Subsequently, the methyltransferase mfmE catalyzes 7-O-methylation to yield 5-hydroxy-4-(hydroxymethyl)-7-methoxy-6-methylphthalide, which undergoes C-3 hydroxylation by the cytochrome P450 monooxygenase mfmF. The resultant cyclopolic acid (2,5-dihydroxy-4-(hydroxymethyl)-7-methoxy-6-methylphthalide) is then farnesylated by the DMATS-type prenyltransferase mfmD to afford 5-O-farnesylcyclopolic acid. Finally, the Pyr4-family terpene cyclase mfmH cyclizes the farnesyl moiety of 5-O-farnesylcyclopolic acid into a drimane-like structure, thus completing the biosynthesis of 11'-O-desmethylfendlerol. In Annulohypoxylon moriforme (Filamentous fungus), this protein is Pyr4-family terpene cyclase mfmH.